Reading from the N-terminus, the 677-residue chain is Platelet glycoprotein Ib alpha chain (677 aa).

The first 16 residues, 1–16, serve as a signal peptide directing secretion; that stretch reads MHLLLWLLLLARLCRP. One can recognise an LRRNT domain in the interval 17–47; the sequence is EFICEVSKVTSQVEVNCDNKGLKALPPGLPG. Topologically, residues 17-564 are extracellular; that stretch reads EFICEVSKVT…NPDLCCLLPL (548 aa). Residues Cys20 and Cys33 are joined by a disulfide bond. LRR repeat units lie at residues 72–93, 94–115, 117–138, 141–162, 165–186, and 189–210; these read RLAQ…GMLP, RLET…GRAL, ALTT…TLDG, HLHE…LLAP, QLRK…FLEG, and ELDT…FFGD. One can recognise an LRRCT domain in the interval 221 to 282; it reads NPWSCDCEIL…HTYQGKDCPS (62 aa). 2 disulfides stabilise this stretch: Cys225–Cys264 and Cys227–Cys280. Sulfotyrosine occurs at positions 291 and 294. Thr309, Thr319, Thr323, Thr324, Thr346, Thr354, Thr368, Thr372, Thr376, Thr377, and Thr399 each carry an O-linked (GalNAc...) threonine glycan. The disordered stretch occupies residues 359–499; sequence TLGPIMPTTT…EPTTTPTSPT (141 aa). Low complexity-rich tracts occupy residues 362-385, 393-403, 411-421, and 427-470; these read PIMP…TTPT, PTTLEPTTTPI, and TPST…TPTI. Pro residues predominate over residues 471–485; that stretch reads PELPTPPTTPEPTMP. The segment covering 486 to 499 has biased composition (low complexity); the sequence is PTTLEPTTTPTSPT. An O-linked (GalNAc...) threonine glycan is attached at Thr487. O-linked (GalNAc...) serine glycosylation occurs at Ser497. Thr500 is a glycosylation site (O-linked (GalNAc...) threonine). Ser523 carries O-linked (GalNAc...) serine glycosylation. The chain crosses the membrane as a helical span at residues 565-585; that stretch reads GFYILGLLWLLFASVVLILLL. Over 586–677 the chain is Cytoplasmic; that stretch reads TWAQHVKPQA…VGVRYSSHSL (92 aa). Ser654 and Ser657 each carry phosphoserine.

In terms of assembly, two GP-Ib beta are disulfide-linked to one GP-Ib alpha. GP-IX is complexed with the GP-Ib heterodimer via a non covalent linkage. Interacts with FLNB. Interacts with FLNA (via filamin repeats 4, 9, 12, 17, 19, 21, and 23). In terms of processing, O-glycosylated. Post-translationally, glycocalicin is the product of a proteolytic cleavage/shedding, catalyzed by ADAM17, which releases most of the extracellular domain. Binding sites for vWF and thrombin are in this part of the protein.

It is found in the membrane. Functionally, GP-Ib, a surface membrane protein of platelets, participates in the formation of platelet plugs by binding to the A1 domain of vWF, which is already bound to the subendothelium. The polypeptide is Platelet glycoprotein Ib alpha chain (GP1BA) (Canis lupus familiaris (Dog)).